We begin with the raw amino-acid sequence, 220 residues long: 7-cyano-7-deazaguanine synthase (220 aa).

ATP is bound at residue Val11 to Met21. Residues Cys186, Cys194, Cys197, and Cys200 each contribute to the Zn(2+) site.

The protein belongs to the QueC family. Zn(2+) is required as a cofactor.

The catalysed reaction is 7-carboxy-7-deazaguanine + NH4(+) + ATP = 7-cyano-7-deazaguanine + ADP + phosphate + H2O + H(+). Its pathway is purine metabolism; 7-cyano-7-deazaguanine biosynthesis. Catalyzes the ATP-dependent conversion of 7-carboxy-7-deazaguanine (CDG) to 7-cyano-7-deazaguanine (preQ(0)). The polypeptide is 7-cyano-7-deazaguanine synthase (Porphyromonas gingivalis (strain ATCC 33277 / DSM 20709 / CIP 103683 / JCM 12257 / NCTC 11834 / 2561)).